Reading from the N-terminus, the 247-residue chain is tRNA uridine(34) hydroxylase (247 aa).

The region spanning 124-218 (TKQDVIVIDT…YLEDTQNKNN (95 aa)) is the Rhodanese domain. The Cysteine persulfide intermediate role is filled by cysteine 178.

Belongs to the TrhO family.

It carries out the reaction uridine(34) in tRNA + AH2 + O2 = 5-hydroxyuridine(34) in tRNA + A + H2O. Functionally, catalyzes oxygen-dependent 5-hydroxyuridine (ho5U) modification at position 34 in tRNAs. This chain is tRNA uridine(34) hydroxylase, found in Rickettsia africae (strain ESF-5).